The sequence spans 176 residues: Flavodoxin-like domain-containing protein BilS (176 aa).

Its pathway is porphyrin-containing compound metabolism; protoheme degradation. Its function is as follows. Together with BilR, catalyzes reduction of mesobilirubin and/or bilirubin to urobilinogen, a key step during heme degradation. BilS is probably involved in electron transfer for the bilirubin reductase BilR. The protein is Flavodoxin-like domain-containing protein BilS of Clostridioides difficile (strain CD3).